Consider the following 94-residue polypeptide: Large ribosomal subunit protein bL25 (94 aa).

Belongs to the bacterial ribosomal protein bL25 family. Part of the 50S ribosomal subunit; part of the 5S rRNA/L5/L18/L25 subcomplex. Contacts the 5S rRNA. Binds to the 5S rRNA independently of L5 and L18.

Its function is as follows. This is one of the proteins that binds to the 5S RNA in the ribosome where it forms part of the central protuberance. The sequence is that of Large ribosomal subunit protein bL25 from Pectobacterium atrosepticum (strain SCRI 1043 / ATCC BAA-672) (Erwinia carotovora subsp. atroseptica).